Reading from the N-terminus, the 603-residue chain is Geraniol synthase Tps-5031G8, chloroplastic (603 aa).

The N-terminal 35 residues, 1–35 (MCSISQKVVIGLNKAAANNCLQNLDRRGFKTRRVS), are a transit peptide targeting the chloroplast. (2E)-geranyl diphosphate-binding residues include R319, D356, D360, R497, and D500. D356 and D360 together coordinate Mg(2+). The DDXXD motif signature appears at 356–360 (DDVYD). Residues D500, T504, and E508 each coordinate Mg(2+).

It belongs to the terpene synthase family. Tpsb subfamily. Monomer. The cofactor is Mg(2+). It depends on Mn(2+) as a cofactor.

Its subcellular location is the plastid. The protein localises to the chloroplast. The enzyme catalyses (2E)-geranyl diphosphate + H2O = (2E)-geraniol + diphosphate. Its pathway is secondary metabolite biosynthesis; terpenoid biosynthesis. In terms of biological role, monoterpene synthase (mono-TPS) involved in the biosynthesis of monoterpenes natural products. Catalyzes the conversion of (2E)-geranyl diphosphate (GPP) into geraniol. This chain is Geraniol synthase Tps-5031G8, chloroplastic, found in Perilla frutescens var. hirtella (Perilla citriodora).